We begin with the raw amino-acid sequence, 873 residues long: Disks large homolog 1 (873 aa).

The 61-residue stretch at R4–E64 folds into the L27 domain. Residues D62–P135 are disordered. The span at T63 to E77 shows a compositional bias: basic and acidic residues. A compositionally biased stretch (polar residues) spans W85–P96. 2 PDZ domains span residues E230–K317 and D325–T412. Residues S441–S456 are compositionally biased toward polar residues. The disordered stretch occupies residues S441–G464. Residues K474–P555 enclose the PDZ 3 domain. The tract at residues N636–F662 is disordered. Over residues H650–F662 the composition is skewed to polar residues. Residues S683–E858 form the Guanylate kinase-like domain.

It belongs to the MAGUK family.

Its subcellular location is the cell membrane. The protein localises to the endoplasmic reticulum membrane. It localises to the cell junction. It is found in the apical cell membrane. Essential multidomain scaffolding protein required for normal development. Recruits channels, receptors and signaling molecules to discrete plasma membrane domains in polarized cells. Promotes epithelial cell layer barrier function via maintaining cell-cell adhesion. May play a role in adherens junction assembly, signal transduction and cell proliferation. May play a role in synapse assembly and function. The sequence is that of Disks large homolog 1 (dlg1) from Danio rerio (Zebrafish).